The following is a 671-amino-acid chain: Nucleolar GTP-binding protein 1 (671 aa).

Positions 169–350 (RTVLICGYPN…VKNAACERLL (182 aa)) constitute an OBG-type G domain. GTP-binding positions include 175 to 182 (GYPNVGKS), 221 to 225 (DTPGI), and 289 to 292 (NKTD). The disordered stretch occupies residues 516-671 (VAQNRSTVPR…KRGKGKTDRR (156 aa)). Residues 595 to 605 (RAMSISRSQSR) show a composition bias toward polar residues. Composition is skewed to basic residues over residues 631–640 (NKSHKKRDKN) and 654–671 (RPKH…TDRR).

The protein belongs to the TRAFAC class OBG-HflX-like GTPase superfamily. OBG GTPase family. NOG subfamily.

It localises to the nucleus. Its subcellular location is the nucleolus. Functionally, involved in the biogenesis of the 60S ribosomal subunit. In Arabidopsis thaliana (Mouse-ear cress), this protein is Nucleolar GTP-binding protein 1.